A 139-amino-acid chain; its full sequence is 3-hydroxyacyl-[acyl-carrier-protein] dehydratase FabZ (139 aa).

His-47 is an active-site residue.

This sequence belongs to the thioester dehydratase family. FabZ subfamily.

The protein resides in the cytoplasm. It carries out the reaction a (3R)-hydroxyacyl-[ACP] = a (2E)-enoyl-[ACP] + H2O. Functionally, involved in unsaturated fatty acids biosynthesis. Catalyzes the dehydration of short chain beta-hydroxyacyl-ACPs and long chain saturated and unsaturated beta-hydroxyacyl-ACPs. The polypeptide is 3-hydroxyacyl-[acyl-carrier-protein] dehydratase FabZ (Clostridium perfringens (strain ATCC 13124 / DSM 756 / JCM 1290 / NCIMB 6125 / NCTC 8237 / Type A)).